The primary structure comprises 242 residues: GLIPR1-like protein 1 (242 aa).

A signal peptide spans 1 to 22 (MALKNKFSCLWILGLCLVATTS). The region spanning 39–171 (EAHNEWRGKV…ASTAIFVCNY (133 aa)) is the SCP domain. Asn119 carries an N-linked (GlcNAc...) asparagine glycan. The GPI-anchor amidated glycine moiety is linked to residue Gly221. A propeptide spans 222–242 (RAPQQTAFNPFSLGFLLLRIF) (removed in mature form).

Belongs to the CRISP family. Part of a oolemmal binding multimeric complex (IZUMO1 complex) composed at least of IZUMO1 and GLIPR1L1; the complex assemblage is influenced by the maturation status of the male germ cell. Interacts with IZUMO1. In terms of processing, N-glycosylated. N-glycosylation decreases during the transit in the caput. Highly expressed in testis.

The protein localises to the cytoplasmic vesicle. It is found in the secretory vesicle. It localises to the acrosome. Its subcellular location is the cell membrane. The protein resides in the membrane raft. The protein localises to the secreted. Functionally, required for optimal fertilization at the stage of sperm-oocyte fusion, plays a role in optimizing acrosome function, the translocation of IZUMO1 during the acrosome reaction and the fertilization process. Component of epididymosomes, one type of membranous microvesicules which mediate the transfer of lipids and proteins to spermatozoa plasma membrane during epididymal maturation. Also component of the CD9-positive microvesicules found in the cauda region. The sequence is that of GLIPR1-like protein 1 (GLIPR1L1) from Homo sapiens (Human).